A 628-amino-acid chain; its full sequence is Hepatocyte nuclear factor 1-alpha (628 aa).

Residues 1 to 31 (MVSKLSQLQTELLAALLESGLSKEALIQALG) form a dimerization region. Positions 1–32 (MVSKLSQLQTELLAALLESGLSKEALIQALGE) constitute an HNF-p1 domain. The tract at residues 47 to 79 (GESCGGTRGDLTELPNGLGETRGSEDDTDDDGE) is disordered. Ser70 bears the Phosphoserine mark. A Phosphothreonine modification is found at Thr74. The POU-specific atypical domain maps to 87–182 (KELENLSPEE…VAQQFTHAGQ (96 aa)). Ser93 is subject to Phosphoserine. Lys117 is covalently cross-linked (Glycyl lysine isopeptide (Lys-Gly) (interchain with G-Cter in ubiquitin)). Interaction with DNA regions lie at residues 130–132 (QRE), 143–149 (HLSQHLN), 155–158 (KTQK), and 203–206 (RFKW). Positions 183–205 (GGLIEEPTGDELPTKKGRRNRFK) are disordered. The Nuclear localization signal signature appears at 197-205 (KKGRRNRFK). The homeobox; HNF1-type DNA-binding region spans 199 to 279 (GRRNRFKWGP…NRRKEEAFRH (81 aa)). Ser247 carries the post-translational modification Phosphoserine. Interaction with DNA stretches follow at residues 263-265 (RVY) and 270-273 (NRRK). Disordered regions lie at residues 284 to 338 (DTYN…SSSG) and 541 to 585 (FTSD…LSTS). A compositionally biased stretch (pro residues) spans 288 to 298 (GPPPGPGPGPA). Phosphoserine is present on Ser313. 2 stretches are compositionally biased toward polar residues: residues 324–338 (QSAT…SSSG) and 558–575 (SPAT…NIQH).

It belongs to the HNF1 homeobox family. Binds DNA as a dimer. Heterotetramer with PCBD1; formed by a dimer of dimers. Interacts with PCBD1. Interacts with BHLHE41. Interacts with NR5A2. Interacts with SPOP; this interaction promotes ubiquitination and degradation of HNF1A. Ubiquitinated in s SPOP-dependent manner; leading to prteasomal degradation. Liver.

It localises to the nucleus. Functionally, transcriptional activator that regulates the tissue specific expression of multiple genes, especially in pancreatic islet cells and in liver. Binds to the inverted palindrome 5'-GTTAATNATTAAC-3'. Activates the transcription of CYP1A2, CYP2E1 and CYP3A11. This chain is Hepatocyte nuclear factor 1-alpha (Hnf1a), found in Rattus norvegicus (Rat).